The chain runs to 398 residues: 1-deoxy-D-xylulose 5-phosphate reductoisomerase (398 aa).

Positions 13, 14, 15, 16, 40, and 127 each coordinate NADPH. Residue lysine 128 coordinates 1-deoxy-D-xylulose 5-phosphate. Residue glutamate 129 participates in NADPH binding. Aspartate 153 contacts Mn(2+). 4 residues coordinate 1-deoxy-D-xylulose 5-phosphate: serine 154, glutamate 155, serine 188, and histidine 211. Glutamate 155 is a binding site for Mn(2+). Residue glycine 217 participates in NADPH binding. 1-deoxy-D-xylulose 5-phosphate contacts are provided by serine 224, asparagine 229, lysine 230, and glutamate 233. Glutamate 233 lines the Mn(2+) pocket.

The protein belongs to the DXR family. Requires Mg(2+) as cofactor. Mn(2+) serves as cofactor.

It carries out the reaction 2-C-methyl-D-erythritol 4-phosphate + NADP(+) = 1-deoxy-D-xylulose 5-phosphate + NADPH + H(+). It functions in the pathway isoprenoid biosynthesis; isopentenyl diphosphate biosynthesis via DXP pathway; isopentenyl diphosphate from 1-deoxy-D-xylulose 5-phosphate: step 1/6. In terms of biological role, catalyzes the NADPH-dependent rearrangement and reduction of 1-deoxy-D-xylulose-5-phosphate (DXP) to 2-C-methyl-D-erythritol 4-phosphate (MEP). This is 1-deoxy-D-xylulose 5-phosphate reductoisomerase from Cellvibrio japonicus (strain Ueda107) (Pseudomonas fluorescens subsp. cellulosa).